Reading from the N-terminus, the 70-residue chain is Sec-independent protein translocase protein TatA (70 aa).

Residues 1-21 form a helical membrane-spanning segment; sequence MFGLGGQELLLILLIILLLFG. Positions 47–70 are disordered; the sequence is EDEFNKAMSDPPEKKEKESPSDKG. Positions 57–70 are enriched in basic and acidic residues; that stretch reads PPEKKEKESPSDKG.

The protein belongs to the TatA/E family. In terms of assembly, forms a complex with TatC.

The protein localises to the cell inner membrane. Functionally, part of the twin-arginine translocation (Tat) system that transports large folded proteins containing a characteristic twin-arginine motif in their signal peptide across membranes. TatA could form the protein-conducting channel of the Tat system. The protein is Sec-independent protein translocase protein TatA of Prosthecochloris aestuarii (strain DSM 271 / SK 413).